The sequence spans 246 residues: Mast cell protease 4 (246 aa).

An N-terminal signal peptide occupies residues 1 to 18 (MQALLFLMALLLPSGAGA). The propeptide at 19-20 (EE) is activation peptide. The region spanning 21-244 (IIGGVESRPH…YVPWINRVIK (224 aa)) is the Peptidase S1 domain. Cys50 and Cys66 are disulfide-bonded. Active-site charge relay system residues include His65 and Asp109. Cystine bridges form between Cys143–Cys208 and Cys174–Cys187. Residue Ser202 is the Charge relay system of the active site.

This sequence belongs to the peptidase S1 family. Granzyme subfamily. As to quaternary structure, monomer. Interacts with iripin-2, a serine protease inhibitor from Ixodes ricinus saliva. As to expression, submucosal mast cells. In femoral muscle, detected in myocytes but not in mast cells.

Completely inhibited by serine protease inhibitors such as chymostatin, diisopropylfluorophosphate and phenylmethylsulfonyl fluoride, but not by p-tosyl-L-phenylalanine chloromethyl ketone, p-tosyl-L-lysine chloromethyl ketone, pepstatin, E-64, EDTA or o-phenanthroline. Also inhibited by lima bean trypsin inhibitor, soy bean trypsin inhibitor and human plasma alpha1-antichymotrypsin. Has chymotrypsin-like activity. Hydrolyzes the amide bonds of synthetic substrates having Tyr and Phe residues at the P1 position. Preferentially hydrolyzes the 'Tyr-4-|-Ile-5' bond of angiotensin I and the 'Phe-20-|-Ala-21' bond of amyloid beta-protein, and is less active towards the 'Phe-8-|-His-9' bond of angiotensin I and the 'Phe-4-|-Ala-5' and 'Tyr-10-|-Glu-11' bonds of amyloid beta-protein. Involved in thrombin regulation and fibronectin processing. This Mus musculus (Mouse) protein is Mast cell protease 4 (Mcpt4).